The sequence spans 204 residues: Large ribosomal subunit protein bL25 (204 aa).

This sequence belongs to the bacterial ribosomal protein bL25 family. CTC subfamily. As to quaternary structure, part of the 50S ribosomal subunit; part of the 5S rRNA/L5/L18/L25 subcomplex. Contacts the 5S rRNA. Binds to the 5S rRNA independently of L5 and L18.

Functionally, this is one of the proteins that binds to the 5S RNA in the ribosome where it forms part of the central protuberance. This is Large ribosomal subunit protein bL25 from Burkholderia pseudomallei (strain 668).